Reading from the N-terminus, the 173-residue chain is Large ribosomal subunit protein uL10 (173 aa).

This sequence belongs to the universal ribosomal protein uL10 family. In terms of assembly, part of the ribosomal stalk of the 50S ribosomal subunit. The N-terminus interacts with L11 and the large rRNA to form the base of the stalk. The C-terminus forms an elongated spine to which L12 dimers bind in a sequential fashion forming a multimeric L10(L12)X complex.

Functionally, forms part of the ribosomal stalk, playing a central role in the interaction of the ribosome with GTP-bound translation factors. The polypeptide is Large ribosomal subunit protein uL10 (Cupriavidus metallidurans (strain ATCC 43123 / DSM 2839 / NBRC 102507 / CH34) (Ralstonia metallidurans)).